The chain runs to 57 residues: Large ribosomal subunit protein bL32c (57 aa).

In terms of assembly, component of the chloroplast large ribosomal subunit (LSU). Mature 70S chloroplast ribosomes of higher plants consist of a small (30S) and a large (50S) subunit. The 30S small subunit contains 1 molecule of ribosomal RNA (16S rRNA) and 24 different proteins. The 50S large subunit contains 3 rRNA molecules (23S, 5S and 4.5S rRNA) and 33 different proteins.

The protein resides in the plastid. It localises to the chloroplast. Component of the chloroplast ribosome (chloro-ribosome), a dedicated translation machinery responsible for the synthesis of chloroplast genome-encoded proteins, including proteins of the transcription and translation machinery and components of the photosynthetic apparatus. This Spinacia oleracea (Spinach) protein is Large ribosomal subunit protein bL32c (rpl32).